The following is a 114-amino-acid chain: Ribulose bisphosphate carboxylase small subunit 2 (114 aa).

The protein belongs to the RuBisCO small chain family. Heterohexadecamer of 8 large and 8 small subunits. Forms a CsoS2-CsoS1-RuBisCO complex.

The protein resides in the carboxysome. RuBisCO catalyzes two reactions: the carboxylation of D-ribulose 1,5-bisphosphate, the primary event in carbon dioxide fixation, as well as the oxidative fragmentation of the pentose substrate. Both reactions occur simultaneously and in competition at the same active site. Although the small subunit is not catalytic it is essential for maximal activity. Functionally, replacing the endogenous type I ccbLS genes in H.neapolitanus with this carboxysomally targeted enzyme reconstitutes RuBisCO with about 25% of normal activity; the active enzyme is targeted to carboxysomes. In Hydrogenovibrio crunogenus (strain DSM 25203 / XCL-2) (Thiomicrospira crunogena), this protein is Ribulose bisphosphate carboxylase small subunit 2.